Reading from the N-terminus, the 71-residue chain is Small ribosomal subunit protein bS21 (71 aa).

Residues 48 to 59 show a composition bias toward basic residues; the sequence is AKASAVKRHAKK. A disordered region spans residues 48–71; it reads AKASAVKRHAKKLSRENARRIRLY. Residues 60–71 show a composition bias toward basic and acidic residues; that stretch reads LSRENARRIRLY.

The protein belongs to the bacterial ribosomal protein bS21 family.

In Aeromonas hydrophila subsp. hydrophila (strain ATCC 7966 / DSM 30187 / BCRC 13018 / CCUG 14551 / JCM 1027 / KCTC 2358 / NCIMB 9240 / NCTC 8049), this protein is Small ribosomal subunit protein bS21.